The following is a 326-amino-acid chain: Phosphate acyltransferase (326 aa).

It belongs to the PlsX family. In terms of assembly, homodimer. Probably interacts with PlsY.

It is found in the cytoplasm. It catalyses the reaction a fatty acyl-[ACP] + phosphate = an acyl phosphate + holo-[ACP]. Its pathway is lipid metabolism; phospholipid metabolism. In terms of biological role, catalyzes the reversible formation of acyl-phosphate (acyl-PO(4)) from acyl-[acyl-carrier-protein] (acyl-ACP). This enzyme utilizes acyl-ACP as fatty acyl donor, but not acyl-CoA. This chain is Phosphate acyltransferase, found in Thermus thermophilus (strain ATCC BAA-163 / DSM 7039 / HB27).